The following is a 125-amino-acid chain: CLAVATA3/ESR (CLE)-related protein ESR3 (125 aa).

An N-terminal signal peptide occupies residues 1 to 26 (MASRMGMVAIMSLFVYAIVVPTSVNA). The interval 45–125 (QQQGGFIGHR…IGPPPLPDRY (81 aa)) is disordered. Pro-75 and Pro-78 each carry hydroxyproline. An O-linked (Ara...) hydroxyproline glycan is attached at Pro-78.

The protein belongs to the CLV3/ESR signal peptide family. In terms of processing, the O-glycosylation (arabinosylation) of the hydroxyproline Pro-78 enhances binding affinity of the ESR3p peptide for its receptor. In terms of tissue distribution, seed endosperm.

It is found in the secreted. The protein localises to the extracellular space. Functionally, extracellular signal peptide that regulates cell fate. The protein is CLAVATA3/ESR (CLE)-related protein ESR3 of Zea mays (Maize).